The primary structure comprises 561 residues: Putative transport protein YbjL (561 aa).

The next 5 helical transmembrane spans lie at 8-28, 32-52, 66-86, 94-114, and 158-178; these read LLNG…LCLG, LGSV…LLGQ, FMLF…SIFF, MLAL…GKLF, and NLSL…IVGA. 2 RCK C-terminal domains span residues 200–288 and 292–373; these read RGLD…SFRN and VFDR…RIGF. A run of 5 helical transmembrane segments spans residues 383 to 403, 406 to 426, 447 to 467, 475 to 495, and 540 to 560; these read LLAF…TFQF, FSFG…LGFL, FGLM…INNG, MLIA…LFGA, and AIAN…WPGL.

It belongs to the AAE transporter (TC 2.A.81) family. YbjL subfamily.

It localises to the cell membrane. The polypeptide is Putative transport protein YbjL (Salmonella paratyphi C (strain RKS4594)).